The sequence spans 25 residues: Flagellar filament core protein flaB1 (25 aa).

This sequence belongs to the bacterial flagellin family. The flagellum consists of an outer layer composed of two sheath proteins, flaA1 (44 kDa) and flaA2 (35 kDa) around a core that contains three proteins flaB1 (37 kDa), flaB2 (34 kDa) and flaB3 (32 kDa).

It is found in the periplasmic flagellum. The protein localises to the periplasm. Component of the core of the flagella. The polypeptide is Flagellar filament core protein flaB1 (flaB1) (Brachyspira hyodysenteriae (Treponema hyodysenteriae)).